A 292-amino-acid chain; its full sequence is Protease HtpX (292 aa).

2 helical membrane passes run 5–25 (IFLF…VMSV) and 34–54 (SGLL…SLLL). Position 140 (His140) interacts with Zn(2+). Glu141 is a catalytic residue. His144 lines the Zn(2+) pocket. The next 2 membrane-spanning stretches (helical) occupy residues 155–175 (LLQG…GGII) and 193–213 (IIVF…AMWF). A Zn(2+)-binding site is contributed by Glu218.

The protein belongs to the peptidase M48B family. The cofactor is Zn(2+).

The protein resides in the cell inner membrane. The sequence is that of Protease HtpX from Xanthomonas oryzae pv. oryzae (strain PXO99A).